The primary structure comprises 314 residues: Malate dehydrogenase (314 aa).

Residues Gly12–Gly17 and Asp36 contribute to the NAD(+) site. Residues Arg87 and Arg93 each coordinate substrate. Residues Asn100 and Leu123–Asn125 contribute to the NAD(+) site. Asn125 lines the substrate pocket. Ser149 carries the phosphoserine modification. Arg156 is a substrate binding site. Catalysis depends on His180, which acts as the Proton acceptor.

This sequence belongs to the LDH/MDH superfamily. MDH type 3 family.

It catalyses the reaction (S)-malate + NAD(+) = oxaloacetate + NADH + H(+). In terms of biological role, catalyzes the reversible oxidation of malate to oxaloacetate. In Halalkalibacterium halodurans (strain ATCC BAA-125 / DSM 18197 / FERM 7344 / JCM 9153 / C-125) (Bacillus halodurans), this protein is Malate dehydrogenase.